Consider the following 142-residue polypeptide: Putative pre-16S rRNA nuclease (142 aa).

Belongs to the YqgF nuclease family.

The protein resides in the cytoplasm. Functionally, could be a nuclease involved in processing of the 5'-end of pre-16S rRNA. In Lactobacillus delbrueckii subsp. bulgaricus (strain ATCC 11842 / DSM 20081 / BCRC 10696 / JCM 1002 / NBRC 13953 / NCIMB 11778 / NCTC 12712 / WDCM 00102 / Lb 14), this protein is Putative pre-16S rRNA nuclease.